The primary structure comprises 412 residues: Multifunctional CCA protein (412 aa).

The ATP site is built by Gly8 and Arg11. Residues Gly8 and Arg11 each coordinate CTP. Positions 21 and 23 each coordinate Mg(2+). ATP is bound by residues Arg91, Arg137, and Arg140. CTP-binding residues include Arg91, Arg137, and Arg140. One can recognise an HD domain in the interval 228 to 329 (TGIHTLMTLS…VKLFDSIDAW (102 aa)).

This sequence belongs to the tRNA nucleotidyltransferase/poly(A) polymerase family. Bacterial CCA-adding enzyme type 1 subfamily. Monomer. Can also form homodimers and oligomers. Mg(2+) serves as cofactor. The cofactor is Ni(2+).

It catalyses the reaction a tRNA precursor + 2 CTP + ATP = a tRNA with a 3' CCA end + 3 diphosphate. The catalysed reaction is a tRNA with a 3' CCA end + 2 CTP + ATP = a tRNA with a 3' CCACCA end + 3 diphosphate. In terms of biological role, catalyzes the addition and repair of the essential 3'-terminal CCA sequence in tRNAs without using a nucleic acid template. Adds these three nucleotides in the order of C, C, and A to the tRNA nucleotide-73, using CTP and ATP as substrates and producing inorganic pyrophosphate. tRNA 3'-terminal CCA addition is required both for tRNA processing and repair. Also involved in tRNA surveillance by mediating tandem CCA addition to generate a CCACCA at the 3' terminus of unstable tRNAs. While stable tRNAs receive only 3'-terminal CCA, unstable tRNAs are marked with CCACCA and rapidly degraded. In Escherichia coli O81 (strain ED1a), this protein is Multifunctional CCA protein.